We begin with the raw amino-acid sequence, 63 residues long: Large ribosomal subunit protein uL29 (63 aa).

The protein belongs to the universal ribosomal protein uL29 family.

The sequence is that of Large ribosomal subunit protein uL29 from Ectopseudomonas mendocina (strain ymp) (Pseudomonas mendocina).